We begin with the raw amino-acid sequence, 317 residues long: Ribosomal RNA large subunit methyltransferase F (317 aa).

It belongs to the methyltransferase superfamily. METTL16/RlmF family.

It localises to the cytoplasm. It carries out the reaction adenosine(1618) in 23S rRNA + S-adenosyl-L-methionine = N(6)-methyladenosine(1618) in 23S rRNA + S-adenosyl-L-homocysteine + H(+). Functionally, specifically methylates the adenine in position 1618 of 23S rRNA. This Pseudomonas putida (strain ATCC 700007 / DSM 6899 / JCM 31910 / BCRC 17059 / LMG 24140 / F1) protein is Ribosomal RNA large subunit methyltransferase F.